The primary structure comprises 97 residues: Large ribosomal subunit protein bL25 (97 aa).

It belongs to the bacterial ribosomal protein bL25 family. In terms of assembly, part of the 50S ribosomal subunit; part of the 5S rRNA/L5/L18/L25 subcomplex. Contacts the 5S rRNA. Binds to the 5S rRNA independently of L5 and L18.

Its function is as follows. This is one of the proteins that binds to the 5S RNA in the ribosome where it forms part of the central protuberance. In Blochmanniella pennsylvanica (strain BPEN), this protein is Large ribosomal subunit protein bL25.